Here is a 143-residue protein sequence, read N- to C-terminus: Peptide methionine sulfoxide reductase MsrB (143 aa).

The region spanning 16–139 is the MsrB domain; it reads DAELRRRLTP…NSAALNFESR (124 aa). Zn(2+) is bound by residues C55, C58, C104, and C107. C128 serves as the catalytic Nucleophile.

The protein belongs to the MsrB Met sulfoxide reductase family. Zn(2+) serves as cofactor.

The catalysed reaction is L-methionyl-[protein] + [thioredoxin]-disulfide + H2O = L-methionyl-(R)-S-oxide-[protein] + [thioredoxin]-dithiol. In Burkholderia orbicola (strain MC0-3), this protein is Peptide methionine sulfoxide reductase MsrB.